The sequence spans 149 residues: MRAVVQRVDKAIVKVNDRIVSDISKGMLVFLGIEKGDDFSDADFLLEKVINLRIFEDEEGKMNRSLSDISGEMLVVSQFTLLGDCRKGRRPSFTSAEDPERSNILYSHFINQASERIPVVKSGIFQAMMKVSLVNDGPVTMLLDSKRLF.

Positions 137–138 (GP) match the Gly-cisPro motif, important for rejection of L-amino acids motif.

It belongs to the DTD family. As to quaternary structure, homodimer.

Its subcellular location is the cytoplasm. It carries out the reaction glycyl-tRNA(Ala) + H2O = tRNA(Ala) + glycine + H(+). The catalysed reaction is a D-aminoacyl-tRNA + H2O = a tRNA + a D-alpha-amino acid + H(+). In terms of biological role, an aminoacyl-tRNA editing enzyme that deacylates mischarged D-aminoacyl-tRNAs. Also deacylates mischarged glycyl-tRNA(Ala), protecting cells against glycine mischarging by AlaRS. Acts via tRNA-based rather than protein-based catalysis; rejects L-amino acids rather than detecting D-amino acids in the active site. By recycling D-aminoacyl-tRNA to D-amino acids and free tRNA molecules, this enzyme counteracts the toxicity associated with the formation of D-aminoacyl-tRNA entities in vivo and helps enforce protein L-homochirality. This Syntrophus aciditrophicus (strain SB) protein is D-aminoacyl-tRNA deacylase.